A 346-amino-acid polypeptide reads, in one-letter code: tRNA N6-adenosine threonylcarbamoyltransferase (346 aa).

Fe cation is bound by residues His111 and His115. Substrate-binding positions include 134–138 (LVSGG), Asp167, Gly180, Asp184, and Asn279. Asp307 is a Fe cation binding site.

This sequence belongs to the KAE1 / TsaD family. It depends on Fe(2+) as a cofactor.

The protein localises to the cytoplasm. It catalyses the reaction L-threonylcarbamoyladenylate + adenosine(37) in tRNA = N(6)-L-threonylcarbamoyladenosine(37) in tRNA + AMP + H(+). Its function is as follows. Required for the formation of a threonylcarbamoyl group on adenosine at position 37 (t(6)A37) in tRNAs that read codons beginning with adenine. Is involved in the transfer of the threonylcarbamoyl moiety of threonylcarbamoyl-AMP (TC-AMP) to the N6 group of A37, together with TsaE and TsaB. TsaD likely plays a direct catalytic role in this reaction. The sequence is that of tRNA N6-adenosine threonylcarbamoyltransferase from Trichormus variabilis (strain ATCC 29413 / PCC 7937) (Anabaena variabilis).